Here is a 225-residue protein sequence, read N- to C-terminus: Protein-L-isoaspartate O-methyltransferase 2 (225 aa).

Ser73 is an active-site residue.

This sequence belongs to the methyltransferase superfamily. L-isoaspartyl/D-aspartyl protein methyltransferase family.

It is found in the cytoplasm. The enzyme catalyses [protein]-L-isoaspartate + S-adenosyl-L-methionine = [protein]-L-isoaspartate alpha-methyl ester + S-adenosyl-L-homocysteine. In terms of biological role, catalyzes the methyl esterification of L-isoaspartyl residues in peptides and proteins that result from spontaneous decomposition of normal L-aspartyl and L-asparaginyl residues. It plays a role in the repair and/or degradation of damaged proteins. This Pelobacter propionicus (strain DSM 2379 / NBRC 103807 / OttBd1) protein is Protein-L-isoaspartate O-methyltransferase 2.